A 228-amino-acid chain; its full sequence is UPF0173 metal-dependent hydrolase LMHCC_0991 (228 aa).

Belongs to the UPF0173 family.

This chain is UPF0173 metal-dependent hydrolase LMHCC_0991, found in Listeria monocytogenes serotype 4a (strain HCC23).